Reading from the N-terminus, the 479-residue chain is Phosphatidylinositol 4-kinase type 2-alpha (479 aa).

Residue Met1 is modified to N-acetylmethionine. Positions 1–74 (MDETSPLVSP…ARGAAAQGQT (74 aa)) are disordered. Residues Ser5, Ser9, Ser44, Ser47, and Ser51 each carry the phosphoserine modification. Residues 31 to 45 (VPGGAVRVAAAAGSG) are compositionally biased toward low complexity. The span at 53 to 66 (GHDRERQPLLDRAR) shows a compositional bias: basic and acidic residues. In terms of domain architecture, PI3K/PI4K catalytic spans 124–453 (CIFPERIYQG…VQMPPVIVET (330 aa)). The tract at residues 130-136 (IYQGSSG) is G-loop. ATP is bound by residues 131–137 (YQGSSGS) and Lys152. The interval 157–159 (EPY) is important for substrate binding. An important for interaction with membranes region spans residues 165 to 178 (KWTKWLQKLCCPCC). S-palmitoyl cysteine attachment occurs at residues Cys174, Cys175, Cys177, and Cys178. 261 to 264 (QLFV) is a binding site for ATP. Residues 268 to 276 (KDADYWLRR) form an important for interaction with membranes region. A catalytic loop region spans residues 305–313 (RNTDRGNDN). The interval 344–364 (AIDNGLAFPLKHPDSWRAYPF) is activation loop. Residue Asp346 participates in ATP binding. Residues 359–368 (WRAYPFYWAW) form an important for interaction with membranes region. A Phosphoserine modification is found at Ser462.

It belongs to the PI3/PI4-kinase family. Type II PI4K subfamily. As to quaternary structure, associates with the BLOC-1 and the AP-3 complexes; the BLOC-1 complex is required for optimal binding of PI4K2A to the AP-3 complex. Interacts with BLOC1S5 and DTNBP1. Interacts with FOS; this interaction may enhance phosphatidylinositol phosphorylation activity. Interacts with ITCH. Interacts with ATG9A. Palmitoylated by ZDHHC3 and ZDHHC7 in the CCPCC motif. Palmitoylation is cholesterol-dependent, and required for TGN localization. In terms of processing, ubiquitinated by ITCH; this does not lead to proteasomal degradation. Widely expressed. Highest expression is observed in kidney, brain, heart, skeletal muscle, and placenta and lowest expression is observed in colon, thymus, and small intestine.

The protein resides in the golgi apparatus. The protein localises to the trans-Golgi network membrane. It localises to the membrane raft. Its subcellular location is the cell projection. It is found in the dendrite. The protein resides in the presynaptic cell membrane. The protein localises to the synapse. It localises to the synaptosome. Its subcellular location is the mitochondrion. It is found in the endosome. The protein resides in the endosome membrane. The protein localises to the cytoplasmic vesicle. It localises to the membrane. Its subcellular location is the cell membrane. It is found in the perikaryon. The protein resides in the neuron projection. The enzyme catalyses a 1,2-diacyl-sn-glycero-3-phospho-(1D-myo-inositol) + ATP = a 1,2-diacyl-sn-glycero-3-phospho-(1D-myo-inositol 4-phosphate) + ADP + H(+). In terms of biological role, membrane-bound phosphatidylinositol-4 kinase (PI4-kinase) that catalyzes the phosphorylation of phosphatidylinositol (PI) to phosphatidylinositol 4-phosphate (PI4P), a lipid that plays important roles in endocytosis, Golgi function, protein sorting and membrane trafficking and is required for prolonged survival of neurons. Besides, phosphorylation of phosphatidylinositol (PI) to phosphatidylinositol 4-phosphate (PI4P) is the first committed step in the generation of phosphatidylinositol 4,5-bisphosphate (PIP2), a precursor of the second messenger inositol 1,4,5-trisphosphate (InsP3). The polypeptide is Phosphatidylinositol 4-kinase type 2-alpha (PI4K2A) (Homo sapiens (Human)).